The following is a 339-amino-acid chain: Olfactory receptor 7E24 (339 aa).

Over 1 to 43 the chain is Extracellular; it reads MSYFPILFFFFLKRCPSYTEPQNLTGVSEFLLLGLSEDPELQP. A glycan (N-linked (GlcNAc...) asparagine) is linked at Asn-23. A helical membrane pass occupies residues 44-64; sequence VLAGLFLSMYLVTVLGNLLII. Topologically, residues 65 to 72 are cytoplasmic; that stretch reads LAVSSDSH. The chain crosses the membrane as a helical span at residues 73–93; it reads LHTPMYFFLSNLSLADIGFTS. The Extracellular portion of the chain corresponds to 94-117; that stretch reads TTVPKMIVDMQTHSRVISYEGCLT. Cys-115 and Cys-207 are joined by a disulfide. Residues 118-138 form a helical membrane-spanning segment; it reads QMSFFVLFACMDDMLLSVMAY. The Cytoplasmic segment spans residues 139-157; that stretch reads DRFVAICHPLHYRIIMNPR. A helical transmembrane segment spans residues 158–178; that stretch reads LCGFLILLSFFISLLDSQLHN. Residues 179 to 215 are Extracellular-facing; it reads LIMLQLTCFKDVDISNFFCDPSQLLHLRCSDTFINEM. Residues 216-235 traverse the membrane as a helical segment; it reads VIYFMGAIFGCLPISGILFS. The Cytoplasmic portion of the chain corresponds to 236-255; the sequence is YYKIVSPILRVPTSDGKYKA. Residues 256–276 form a helical membrane-spanning segment; the sequence is FSTCGSHLAVVCLFYGTGLVG. The Extracellular portion of the chain corresponds to 277–289; that stretch reads YLSSAVLPSPRKS. The helical transmembrane segment at 290 to 310 threads the bilayer; the sequence is MVASVMYTVVTPMLNPFIYSL. Topologically, residues 311–339 are cytoplasmic; the sequence is RNKDIQSALCRLHGRIIKSHHLHPFCYMG.

This sequence belongs to the G-protein coupled receptor 1 family.

The protein localises to the cell membrane. In terms of biological role, odorant receptor. This Homo sapiens (Human) protein is Olfactory receptor 7E24 (OR7E24).